A 193-amino-acid chain; its full sequence is Probable DNA-directed RNA polymerase subunit delta (193 aa).

The HTH HARE-type domain maps to 14 to 83; the sequence is LSMIEVARAI…GENKWGLRSW (70 aa). 2 stretches are compositionally biased toward acidic residues: residues 117–134 and 142–193; these read GDDD…DEDN and EYDD…VVDE. Residues 117-193 form a disordered region; the sequence is GDDDAIDYGH…EYSDEEVVDE (77 aa).

Belongs to the RpoE family. As to quaternary structure, RNAP is composed of a core of 2 alpha, a beta and a beta' subunits. The core is associated with a delta subunit and one of several sigma factors.

Functionally, participates in both the initiation and recycling phases of transcription. In the presence of the delta subunit, RNAP displays an increased specificity of transcription, a decreased affinity for nucleic acids, and an increased efficiency of RNA synthesis because of enhanced recycling. This chain is Probable DNA-directed RNA polymerase subunit delta, found in Streptococcus suis (strain 05ZYH33).